Here is a 120-residue protein sequence, read N- to C-terminus: Meiosis expressed gene 1 protein homolog (120 aa).

The tract at residues 1–45 (MDGLAIGGVSAPMTAERPQQVKKQLSRRTPDAADGRKPTRMERAK) is disordered. Over residues 28–45 (RTPDAADGRKPTRMERAK) the composition is skewed to basic and acidic residues.

Belongs to the MEIG1 family.

This chain is Meiosis expressed gene 1 protein homolog, found in Oxyrrhis marina (Dinoflagellate).